The chain runs to 313 residues: uncharacterized protein (313 aa).

Residues 2-57 (KLERLLAMVVLLISKKQVQAAELAELFEVSVRTIYRDIETINRAGIPIVTSQGSGG) form the HTH deoR-type domain. Residues 19–38 (VQAAELAELFEVSVRTIYRD) constitute a DNA-binding region (H-T-H motif). Positions 131-210 (HTEDQKTLRE…KDLAILHQTF (80 aa)) constitute a WYL domain.

Its subcellular location is the cytoplasm. This is an uncharacterized protein from Bacillus subtilis (strain 168).